Reading from the N-terminus, the 313-residue chain is Aspartate carbamoyltransferase catalytic subunit (313 aa).

Residues R58 and T59 each contribute to the carbamoyl phosphate site. Residue K86 participates in L-aspartate binding. Residues R108, H136, and Q139 each contribute to the carbamoyl phosphate site. Residues R169 and R223 each coordinate L-aspartate. Carbamoyl phosphate is bound by residues G265 and P266.

It belongs to the aspartate/ornithine carbamoyltransferase superfamily. ATCase family. As to quaternary structure, heterododecamer (2C3:3R2) of six catalytic PyrB chains organized as two trimers (C3), and six regulatory PyrI chains organized as three dimers (R2).

The catalysed reaction is carbamoyl phosphate + L-aspartate = N-carbamoyl-L-aspartate + phosphate + H(+). Its pathway is pyrimidine metabolism; UMP biosynthesis via de novo pathway; (S)-dihydroorotate from bicarbonate: step 2/3. Its function is as follows. Catalyzes the condensation of carbamoyl phosphate and aspartate to form carbamoyl aspartate and inorganic phosphate, the committed step in the de novo pyrimidine nucleotide biosynthesis pathway. The chain is Aspartate carbamoyltransferase catalytic subunit from Anaeromyxobacter dehalogenans (strain 2CP-1 / ATCC BAA-258).